The primary structure comprises 188 residues: dCTP deaminase (188 aa).

DCTP contacts are provided by residues 111–116 (KSTYAR), 135–137 (TLE), Gln156, Tyr170, and Gln180. Residue Glu137 is the Proton donor/acceptor of the active site.

This sequence belongs to the dCTP deaminase family. In terms of assembly, homotrimer.

It catalyses the reaction dCTP + H2O + H(+) = dUTP + NH4(+). It functions in the pathway pyrimidine metabolism; dUMP biosynthesis; dUMP from dCTP (dUTP route): step 1/2. In terms of biological role, catalyzes the deamination of dCTP to dUTP. The polypeptide is dCTP deaminase (Legionella pneumophila (strain Paris)).